Here is a 554-residue protein sequence, read N- to C-terminus: Glutamine--tRNA ligase (554 aa).

A 'HIGH' region motif is present at residues 34–44 (PEPNGYLHIGH). ATP-binding positions include 35 to 37 (EPN) and 41 to 47 (HIGHAKS). Residues Asp-67 and Tyr-212 each coordinate L-glutamine. Residues Thr-231, 261–262 (RL), and 269–271 (MSK) each bind ATP. A 'KMSKS' region motif is present at residues 268–272 (VMSKR). The interaction with tRNA stretch occupies residues 317 to 324 (TKQDNTIE).

Belongs to the class-I aminoacyl-tRNA synthetase family. As to quaternary structure, monomer.

Its subcellular location is the cytoplasm. It carries out the reaction tRNA(Gln) + L-glutamine + ATP = L-glutaminyl-tRNA(Gln) + AMP + diphosphate. The sequence is that of Glutamine--tRNA ligase from Escherichia coli O7:K1 (strain IAI39 / ExPEC).